A 1241-amino-acid chain; its full sequence is ATP-dependent helicase/nuclease subunit A (1241 aa).

The UvrD-like helicase ATP-binding domain maps to 12–485 (SQWTDDQWKA…IDLAKNFRSR (474 aa)). 33–40 (AAAGSGKT) contacts ATP. Residues 505-805 (GEIDYDADAE…RIMTIHKSKG (301 aa)) form the UvrD-like helicase C-terminal domain.

It belongs to the helicase family. AddA subfamily. As to quaternary structure, heterodimer of AddA and AddB/RexB. Requires Mg(2+) as cofactor.

It catalyses the reaction Couples ATP hydrolysis with the unwinding of duplex DNA by translocating in the 3'-5' direction.. The catalysed reaction is ATP + H2O = ADP + phosphate + H(+). The heterodimer acts as both an ATP-dependent DNA helicase and an ATP-dependent, dual-direction single-stranded exonuclease. Recognizes the chi site generating a DNA molecule suitable for the initiation of homologous recombination. The AddA nuclease domain is required for chi fragment generation; this subunit has the helicase and 3' -&gt; 5' nuclease activities. This is ATP-dependent helicase/nuclease subunit A from Bacillus anthracis.